The sequence spans 543 residues: Methionine--tRNA ligase (543 aa).

The 'HIGH' region signature appears at P13–H23. Zn(2+) contacts are provided by C145, C148, C158, and C161. Residues Q334 to S338 carry the 'KMSKS' region motif. Residue K337 coordinates ATP.

It belongs to the class-I aminoacyl-tRNA synthetase family. MetG type 1 subfamily. It depends on Zn(2+) as a cofactor.

The protein localises to the cytoplasm. It carries out the reaction tRNA(Met) + L-methionine + ATP = L-methionyl-tRNA(Met) + AMP + diphosphate. Functionally, is required not only for elongation of protein synthesis but also for the initiation of all mRNA translation through initiator tRNA(fMet) aminoacylation. The protein is Methionine--tRNA ligase of Thermoplasma volcanium (strain ATCC 51530 / DSM 4299 / JCM 9571 / NBRC 15438 / GSS1).